A 298-amino-acid chain; its full sequence is tRNA pseudouridine synthase-like 1 (298 aa).

D60 functions as the Nucleophile in the catalytic mechanism. Y124 serves as a coordination point for substrate.

Belongs to the tRNA pseudouridine synthase TruA family.

The enzyme catalyses a uridine in tRNA = a pseudouridine in tRNA. The sequence is that of tRNA pseudouridine synthase-like 1 (pusl1) from Xenopus laevis (African clawed frog).